Reading from the N-terminus, the 398-residue chain is Energy-coupling factor transporter ATP-binding protein EcfA2 (398 aa).

One can recognise an ABC transporter domain in the interval 5 to 240 (IELKDLEYAY…KELVRRARLK (236 aa)). 38 to 45 (GSNGAGKS) serves as a coordination point for ATP.

This sequence belongs to the ABC transporter superfamily. Energy-coupling factor EcfA family. In terms of assembly, forms a stable energy-coupling factor (ECF) transporter complex composed of 2 membrane-embedded substrate-binding proteins (S component), 2 ATP-binding proteins (A component) and 2 transmembrane proteins (T component).

It is found in the cell membrane. In terms of biological role, ATP-binding (A) component of a common energy-coupling factor (ECF) ABC-transporter complex. Unlike classic ABC transporters this ECF transporter provides the energy necessary to transport a number of different substrates. This is Energy-coupling factor transporter ATP-binding protein EcfA2 from Methanospirillum hungatei JF-1 (strain ATCC 27890 / DSM 864 / NBRC 100397 / JF-1).